We begin with the raw amino-acid sequence, 443 residues long: Probable glucomannan 4-beta-mannosyltransferase 11 (443 aa).

Residue D52 is part of the active site. Substrate contacts are provided by D111 and D113. The active site involves D205. 4 helical membrane passes run 284–304 (IIVHFFTFFFYCFILPTSVFF), 321–341 (ITLFNAIATPRSFYLVIFWVL), 400–420 (EMMVGIYILCCASYNLVFGKT), and 421–441 (VLYIYLYMQALAFIIAGIGFI).

Belongs to the glycosyltransferase 2 family. Plant cellulose synthase-like A subfamily.

The protein resides in the golgi apparatus membrane. It catalyses the reaction GDP-mannose + (glucomannan)n = GDP + (glucomannan)n+1.. Functionally, probable mannan synthase which consists of a 4-beta-mannosyltransferase activity on mannan using GDP-mannose. The beta-1,4-mannan product is the backbone for galactomannan synthesis by galactomannan galactosyltransferase. Galactomannan is a noncellulosic polysaccharides of plant cell wall. This is Probable glucomannan 4-beta-mannosyltransferase 11 from Arabidopsis thaliana (Mouse-ear cress).